We begin with the raw amino-acid sequence, 493 residues long: Glutamyl-tRNA(Gln) amidotransferase subunit A (493 aa).

Residues K81 and S156 each act as charge relay system in the active site. S180 (acyl-ester intermediate) is an active-site residue.

It belongs to the amidase family. GatA subfamily. Heterotrimer of A, B and C subunits.

The catalysed reaction is L-glutamyl-tRNA(Gln) + L-glutamine + ATP + H2O = L-glutaminyl-tRNA(Gln) + L-glutamate + ADP + phosphate + H(+). Allows the formation of correctly charged Gln-tRNA(Gln) through the transamidation of misacylated Glu-tRNA(Gln) in organisms which lack glutaminyl-tRNA synthetase. The reaction takes place in the presence of glutamine and ATP through an activated gamma-phospho-Glu-tRNA(Gln). The protein is Glutamyl-tRNA(Gln) amidotransferase subunit A of Mycolicibacterium paratuberculosis (strain ATCC BAA-968 / K-10) (Mycobacterium paratuberculosis).